The following is a 176-amino-acid chain: Lactoylglutathione lyase (176 aa).

Residues 23-167 enclose the VOC domain; that stretch reads VFNHTMLRVK…DGYWVEIVQA (145 aa). Position 26 (His-26) interacts with Ni(2+). Arg-30 contributes to the substrate binding site. Glu-92 lines the Ni(2+) pocket. Positions 96, 114, and 118 each coordinate substrate. Ni(2+) is bound by residues His-118 and Glu-163. Glu-163 serves as the catalytic Proton donor/acceptor.

The protein belongs to the glyoxalase I family. Monomer. It depends on Ni(2+) as a cofactor. The cofactor is Zn(2+).

The catalysed reaction is (R)-S-lactoylglutathione = methylglyoxal + glutathione. Its pathway is secondary metabolite metabolism; methylglyoxal degradation; (R)-lactate from methylglyoxal: step 1/2. Functionally, catalyzes the conversion of hemimercaptal, formed from methylglyoxal and glutathione, to S-lactoylglutathione. The protein is Lactoylglutathione lyase (gloA) of Pseudomonas aeruginosa (strain ATCC 15692 / DSM 22644 / CIP 104116 / JCM 14847 / LMG 12228 / 1C / PRS 101 / PAO1).